Reading from the N-terminus, the 322-residue chain is Ribosomal RNA large subunit methyltransferase F (322 aa).

It belongs to the methyltransferase superfamily. METTL16/RlmF family.

It is found in the cytoplasm. It carries out the reaction adenosine(1618) in 23S rRNA + S-adenosyl-L-methionine = N(6)-methyladenosine(1618) in 23S rRNA + S-adenosyl-L-homocysteine + H(+). Functionally, specifically methylates the adenine in position 1618 of 23S rRNA. The chain is Ribosomal RNA large subunit methyltransferase F from Cytophaga hutchinsonii (strain ATCC 33406 / DSM 1761 / CIP 103989 / NBRC 15051 / NCIMB 9469 / D465).